The chain runs to 304 residues: N-acetylmuramic acid 6-phosphate etherase (304 aa).

The 164-residue stretch at 58–221 (IAERIHRGGR…STGVMIKLGK (164 aa)) folds into the SIS domain. Glu-86 serves as the catalytic Proton donor. Residue Glu-117 is part of the active site.

Belongs to the GCKR-like family. MurNAc-6-P etherase subfamily. As to quaternary structure, homodimer.

The catalysed reaction is N-acetyl-D-muramate 6-phosphate + H2O = N-acetyl-D-glucosamine 6-phosphate + (R)-lactate. It participates in amino-sugar metabolism; N-acetylmuramate degradation. Its function is as follows. Specifically catalyzes the cleavage of the D-lactyl ether substituent of MurNAc 6-phosphate, producing GlcNAc 6-phosphate and D-lactate. This is N-acetylmuramic acid 6-phosphate etherase from Clostridium beijerinckii (strain ATCC 51743 / NCIMB 8052) (Clostridium acetobutylicum).